Here is a 319-residue protein sequence, read N- to C-terminus: Taste receptor type 2 member 14 (319 aa).

Residues 1–7 (MDGVIKS) lie on the Extracellular side of the membrane. The chain crosses the membrane as a helical span at residues 8–28 (IFTFILIVEFIIGNLGNSFIV). Over 29–55 (LVNCIDWVKRRKISLVDQILIALAISR) the chain is Cytoplasmic. Residues 56–76 (ISLVWSIFGSWCVSVFFPALF) form a helical membrane-spanning segment. At 77-87 (ATEKLLRMLTN) the chain is on the extracellular side. Cholesterol contacts are provided by Thr86 and Trp89. A helical transmembrane segment spans residues 88-108 (IWTVTNHFSVWLATILGTFYF). Residues 109 to 129 (LKIANFSNSIFLYLKWRVKKV) lie on the Cytoplasmic side of the membrane. A helical membrane pass occupies residues 130 to 150 (VLVLLLVTLGLLFLNILLINI). Residues 151–184 (HINASINGYRGNMTCSSASCNFIRFSRAIALTST) lie on the Extracellular side of the membrane. Asn153 and Asn162 each carry an N-linked (GlcNAc...) asparagine glycan. A cholesterol-binding site is contributed by Ala180. A helical transmembrane segment spans residues 185 to 205 (VFVLIPFTLSLATSLLLSFSL). Residues 206–233 (WKHHKKMQHTVKGYRDVSTKAHRGVMQT) are Cytoplasmic-facing. Residues 234–254 (VITFLLLYAVFLLTFFISIWA) traverse the membrane as a helical segment. Topologically, residues 255 to 263 (SVRLKENQI) are extracellular. The chain crosses the membrane as a helical span at residues 264–284 (IILSEMMGLAYPSGHSCVLIL). Residues Ser267 and Met270 each contribute to the cholesterol site. Topologically, residues 285–319 (GNKKLRQASLSVLWWLRYRFKHGEPSGHKEFRESS) are cytoplasmic.

The protein belongs to the G-protein coupled receptor T2R family. Core component of the TAS2R14-GNAI1 complex, consisting of TAS2R14, GNAI1, GNB1 and GNG2; within the complex interacts with GNAI1. Core component of the TAS2R14-GNAT3 complex, consisting of TAS2R14, GNAT3, GNB1 and GNG2; within the complex interacts with GNAT3. Core component of the TAS2R14-GNAS2 complex, consisting of TAS2R14, GNAS2, GNB1 and GNG2; within the complex interacts with GNAS2.

It is found in the membrane. It carries out the reaction Ca(2+)(in) = Ca(2+)(out). The enzyme catalyses 3',5'-cyclic AMP(in) = 3',5'-cyclic AMP(out). With respect to regulation, basal activity is enhanced by binding to bitter tastants, such as flufenamic acid and aristolochic acid. Regulated by cholesterol in a concentration-dependent manner. Functionally, gustducin-linked G-protein coupled receptor that plays a role in the perception of bitterness. The activity of this receptor stimulates GNAT3, activating the gustducin G-protein pathway. Likely plays a role in sensing the chemical composition of the gastrointestinal content and other extra-oral tissues via the inhibitory G-protein pathways. This chain is Taste receptor type 2 member 14 (TAS2R14), found in Macaca mulatta (Rhesus macaque).